The sequence spans 652 residues: O-fucosyltransferase 15 (652 aa).

A helical; Signal-anchor for type II membrane protein transmembrane segment spans residues 91–111 (TAAFVIVLVGFFIFVNWFMLS). N-linked (GlcNAc...) asparagine glycosylation is found at Asn139, Asn169, and Asn251. 426 to 428 (HLR) provides a ligand contact to substrate. Asn464, Asn546, and Asn607 each carry an N-linked (GlcNAc...) asparagine glycan.

The protein belongs to the glycosyltransferase GT106 family.

It is found in the membrane. It participates in glycan metabolism. The chain is O-fucosyltransferase 15 from Arabidopsis thaliana (Mouse-ear cress).